Reading from the N-terminus, the 483-residue chain is MSVRVTQKSYKMSTSGPRAFSSRSFTSGPGARISSSSFSRVGSSSSSFRGSLGGFGGAGVGGITAVTVNQSLLNPLKLEVDPNIQAVRTQEKEQIKTLNNKFASFIDKVRFLEQQNKMLETKWSLLQQQKTSRSNMDNMFESYINNLRRQLEALGQEKLKLEVELGNMQGLVEDFKNKYEDEINKRTEMENEFVLIKKDVDEAYMNKVELESRLEGLTDEINFLRQIHEEEIRELQSQISDTSVVLSMDNSRSLDMDSIIAEVRAQYEEIANRSRAEAETMYQIKYEELQTLAGKHGDDLRRSKTEISEMNRNISRLQAEIDALKGQRATLEAAIADAEQRGELAVKDANAKLEDLKNALQKAKQDMARQLREYQELMNVKLALDIEIATYRKLLEGEESRLESGMQNMSIHTKTTSGYAGGLSSSYGGLTSPGFSYGMSSFQPGFGSVGGSSTYSRTKAVVVKKIETRDGKLVSESSDIMSK.

Residues 1-25 (MSVRVTQKSYKMSTSGPRAFSSRSF) show a composition bias toward polar residues. The segment at 1–43 (MSVRVTQKSYKMSTSGPRAFSSRSFTSGPGARISSSSFSRVGS) is disordered. Residues 1 to 90 (MSVRVTQKSY…DPNIQAVRTQ (90 aa)) form a head region. The residue at position 9 (Ser-9) is a Phosphoserine; by PKC/PRKCE. Lys-11 participates in a covalent cross-link: Glycyl lysine isopeptide (Lys-Gly) (interchain with G-Cter in SUMO2). Phosphoserine occurs at positions 13, 15, 21, and 22. At Arg-23 the chain carries Omega-N-methylarginine. Ser-24 is subject to Phosphoserine; by PKC/PRKCE. A Phosphoserine modification is found at Ser-24. Thr-26 carries the post-translational modification Phosphothreonine. Residues 26–43 (TSGPGARISSSSFSRVGS) show a composition bias toward low complexity. At Ser-27 the chain carries Phosphoserine. Residue Arg-32 is modified to Omega-N-methylarginine. Phosphoserine occurs at positions 34, 37, and 39. Arg-40 carries the omega-N-methylarginine modification. Phosphoserine occurs at positions 43, 44, and 47. Arg-49 carries the post-translational modification Asymmetric dimethylarginine; alternate. Residue Arg-49 is modified to Omega-N-methylarginine; alternate. Ser-51 carries the phosphoserine modification. A coil 1A region spans residues 91 to 126 (EKEQIKTLNNKFASFIDKVRFLEQQNKMLETKWSLL). Residues 91–402 (EKEQIKTLNN…KLLEGEESRL (312 aa)) form the IF rod domain. An N6-malonyllysine modification is found at Lys-101. Glycyl lysine isopeptide (Lys-Gly) (interchain with G-Cter in SUMO2) cross-links involve residues Lys-122 and Lys-130. The linker 1 stretch occupies residues 127–143 (QQQKTSRSNMDNMFESY). A coil 1B region spans residues 144-235 (INNLRRQLEA…QIHEEEIREL (92 aa)). Lys-197 participates in a covalent cross-link: Glycyl lysine isopeptide (Lys-Gly) (interchain with G-Cter in SUMO1); alternate. A Glycyl lysine isopeptide (Lys-Gly) (interchain with G-Cter in SUMO2); alternate cross-link involves residue Lys-197. N6-acetyllysine is present on Lys-207. The segment at 236-259 (QSQISDTSVVLSMDNSRSLDMDSI) is linker 12. Phosphoserine is present on residues Ser-253, Ser-258, and Ser-274. The coil 2 stretch occupies residues 260–398 (IAEVRAQYEE…ATYRKLLEGE (139 aa)). Residues 261–382 (AEVRAQYEEI…EYQELMNVKL (122 aa)) are necessary for interaction with PNN. Residue Lys-285 forms a Glycyl lysine isopeptide (Lys-Gly) (interchain with G-Cter in SUMO2) linkage. Lys-295 participates in a covalent cross-link: Glycyl lysine isopeptide (Lys-Gly) (interchain with G-Cter in SUMO2); alternate. N6-acetyllysine; alternate is present on Lys-295. A Glycyl lysine isopeptide (Lys-Gly) (interchain with G-Cter in SUMO2) cross-link involves residue Lys-304. Lys-325 is covalently cross-linked (Glycyl lysine isopeptide (Lys-Gly) (interchain with G-Cter in SUMO2); alternate). Lys-325 is subject to N6-acetyllysine; alternate. Residue Lys-393 forms a Glycyl lysine isopeptide (Lys-Gly) (interchain with G-Cter in SUMO2) linkage. The interval 399 to 483 (ESRLESGMQN…VSESSDIMSK (85 aa)) is tail. Phosphoserine occurs at positions 400, 404, 410, 417, 424, 426, and 432. Lys-472 participates in a covalent cross-link: Glycyl lysine isopeptide (Lys-Gly) (interchain with G-Cter in SUMO1); alternate. Lys-472 participates in a covalent cross-link: Glycyl lysine isopeptide (Lys-Gly) (interchain with G-Cter in SUMO2); alternate. Phosphoserine is present on residues Ser-475, Ser-477, Ser-478, and Ser-482.

Belongs to the intermediate filament family. Heterotetramer of two type I and two type II keratins. Forms a heterodimer with KRT18. Associates with KRT20. Interacts with PNN. When associated with KRT19, interacts with DMD. Interacts with TCHP. Interacts with APEX1. Interacts with GPER1. Interacts with EPPK1. Interacts with PKP1 and PKP2. Post-translationally, O-glycosylated. O-GlcNAcylation at multiple sites increases solubility, and decreases stability by inducing proteasomal degradation. In terms of processing, O-glycosylated (O-GlcNAcylated), in a cell cycle-dependent manner. As to expression, expressed in cardiac and striated muscle. Expressed at Z-lines within the muscle fibers and at Z-line and M-line domains at costameres at the sarcolemmal membrane (at protein level). Observed in coagulating gland, bladder, salivary gland, kidney, spleen, thymus, lung and heart. Also observed in ventral prostate, seminal vesicle and liver where expression increases following castration.

It localises to the cytoplasm. It is found in the nucleus. Its subcellular location is the nucleoplasm. The protein localises to the nucleus matrix. Its function is as follows. Together with KRT19, helps to link the contractile apparatus to dystrophin at the costameres of striated muscle. The polypeptide is Keratin, type II cytoskeletal 8 (Krt8) (Rattus norvegicus (Rat)).